Reading from the N-terminus, the 173-residue chain is Ribulose bisphosphate carboxylase small subunit, chloroplastic 5 (173 aa).

Residues 1-49 constitute a chloroplast transit peptide; that stretch reads MASIPATVATVAQANMVAPFTGLKSNAAFPVTKKVNDFSTLPSNGGRVQ.

Belongs to the RuBisCO small chain family. In terms of assembly, heterohexadecamer of 8 large and 8 small subunits.

It localises to the plastid. It is found in the chloroplast. RuBisCO catalyzes two reactions: the carboxylation of D-ribulose 1,5-bisphosphate, the primary event in carbon dioxide fixation, as well as the oxidative fragmentation of the pentose substrate. Both reactions occur simultaneously and in competition at the same active site. Although the small subunit is not catalytic it is essential for maximal activity. This Flaveria pringlei protein is Ribulose bisphosphate carboxylase small subunit, chloroplastic 5.